The primary structure comprises 225 residues: Ras-related protein Rab-32 (225 aa).

N-acetylalanine is present on Ala2. Residues Val36, Gly37, Lys38, Thr39, Ser40, Ser51, Gln52, Tyr54, and Thr57 each coordinate GTP. A Mg(2+)-binding site is contributed by Thr39. Residues 48–62 (QLFSQHYRATIGVDF) carry the Switch 1 motif. Thr57 is a Mg(2+) binding site. The residue at position 71 (Ser71) is a Phosphoserine. Position 81 (Asp81) interacts with Mg(2+). GTP is bound by residues Gly84, Asn143, Lys144, Asp146, Ala175, and Lys176. Positions 84 to 97 (GQERFGNMTRVYYK) match the Switch 2 motif. Residues 178 to 197 (NINIEEAARFLVEKILVNHQ) form a PKA-RII subunit binding domain region. Residues Cys224 and Cys225 are each lipidated (S-geranylgeranyl cysteine).

Belongs to the small GTPase superfamily. Rab family. In terms of assembly, interacts with ANKRD27. A decreased interaction with ANKRD27 seen in the presence of SGSM2. Interacts with LRRK2 (via N-terminus); this interaction results in stimulation of RAB10 phosphorylation by LRRK2. The cofactor is Mg(2+). Widely expressed with high levels in heart, liver, kidney, bone marrow, testis, colon and fetal lung.

It localises to the mitochondrion. Its subcellular location is the mitochondrion outer membrane. The protein resides in the cytoplasmic vesicle. The protein localises to the phagosome. It is found in the phagosome membrane. It localises to the melanosome. Its subcellular location is the melanosome membrane. The enzyme catalyses GTP + H2O = GDP + phosphate + H(+). Its activity is regulated as follows. Regulated by guanine the nucleotide exchange factor (GEF) BLOC-3 complex composed of HPS1 and HPS4 which promote the exchange of bound GDP for free GTP. Regulated by the GTPase activating protein (GAP) SGSM2/RUTBC1 which increases the GTP hydrolysis activity. Inhibited by GDP dissociation inhibitors (GDIs) which prevent Rab-GDP dissociation. In terms of biological role, the small GTPases Rab are key regulators of intracellular membrane trafficking, from the formation of transport vesicles to their fusion with membranes. Rabs cycle between an inactive GDP-bound form and an active GTP-bound form that is able to recruit to membranes different set of downstream effectors directly responsible for vesicle formation, movement, tethering and fusion. Also acts as an A-kinase anchoring protein by binding to the type II regulatory subunit of protein kinase A and anchoring it to the mitochondrion. Also involved in synchronization of mitochondrial fission. Plays a role in the maturation of phagosomes that engulf pathogens, such as S.aureus and M.tuberculosis. Plays an important role in the control of melanin production and melanosome biogenesis. In concert with RAB38, regulates the proper trafficking of melanogenic enzymes TYR, TYRP1 and DCT/TYRP2 to melanosomes in melanocytes. Stimulates phosphorylation of RAB10 'Thr-73' by LRRK2. The polypeptide is Ras-related protein Rab-32 (Homo sapiens (Human)).